Here is a 148-residue protein sequence, read N- to C-terminus: Histone H2A-like 3 (148 aa).

The interval 101–128 is disordered; that stretch reads DDTHSQVEEMPQSEEEEEEEEEKEEEMV. Positions 111–127 are enriched in acidic residues; the sequence is PQSEEEEEEEEEKEEEM.

The protein belongs to the histone H2A family. In terms of assembly, the nucleosome is a histone octamer containing two molecules each of H2A, H2B, H3 and H4 assembled in one H3-H4 heterotetramer and two H2A-H2B heterodimers. The octamer wraps approximately 147 bp of DNA.

The protein resides in the nucleus. The protein localises to the chromosome. Its function is as follows. Core component of nucleosome. Nucleosomes wrap and compact DNA into chromatin, limiting DNA accessibility to the cellular machineries which require DNA as a template. Histones thereby play a central role in transcription regulation, DNA repair, DNA replication and chromosomal stability. DNA accessibility is regulated via a complex set of post-translational modifications of histones, also called histone code, and nucleosome remodeling. The sequence is that of Histone H2A-like 3 from Homo sapiens (Human).